The sequence spans 378 residues: MKILVDENMPYARELFSRLGEVKAVPGRPIPVVQLDDADALMVRSVTKVNESLLAGKPIKFVGTATAGTDHVDEVWLKQAGIGFSAAPGCNAIAVVEYVFSSLLMLAERDGFSLHERTVGIVGVGNVGRRLQARLEVLGIKTLLCDPPRADRGDEGDFRSLDELVQHADILTFHTPLFKDGPYKTLHLADEKLIRSLKPGAILINACRGAVVDNTALLTCLNEGQKLSVVLDVWEGEPELNVELLKKVDIGTPHIAGYTLEGKARGTTQVFEAYSKFIGHEQHVALDTLLPAPEFGRITLHGPLDQPTLKRLVHLVYDVRRDDAPLRKVAGIPGEFDKLRKNYLERREWSSLYVICDDASAASLLCKLGFNAVHHPAR.

Substrate is bound by residues S45 and T66. 2 residues coordinate NAD(+): D146 and T175. Residue R208 is part of the active site. An NAD(+)-binding site is contributed by D232. The active site involves E237. H254 (proton donor) is an active-site residue. G257 contacts NAD(+). Y258 serves as a coordination point for substrate.

It belongs to the D-isomer specific 2-hydroxyacid dehydrogenase family. PdxB subfamily. In terms of assembly, homodimer.

It is found in the cytoplasm. The catalysed reaction is 4-phospho-D-erythronate + NAD(+) = (R)-3-hydroxy-2-oxo-4-phosphooxybutanoate + NADH + H(+). Its pathway is cofactor biosynthesis; pyridoxine 5'-phosphate biosynthesis; pyridoxine 5'-phosphate from D-erythrose 4-phosphate: step 2/5. Functionally, catalyzes the oxidation of erythronate-4-phosphate to 3-hydroxy-2-oxo-4-phosphonooxybutanoate. The chain is Erythronate-4-phosphate dehydrogenase from Escherichia coli O139:H28 (strain E24377A / ETEC).